Reading from the N-terminus, the 607-residue chain is Albumin (607 aa).

Residues 1 to 18 (MKWVTFISLLLLFSSAYS) form the signal peptide. Residues 19–24 (RGVFRR) constitute a propeptide that is removed on maturation. 3 consecutive Albumin domains span residues 19-209 (RGVF…DAMR), 210-402 (EKVL…KLKH), and 403-600 (LVDE…KLVA). Residue His-27 participates in Cu cation binding. Position 29 is a phosphoserine (Ser-29). The Ca(2+) site is built by Glu-30 and Asp-37. Cys-77 and Cys-86 are disulfide-bonded. 2 positions are modified to phosphoserine: Ser-82 and Ser-89. His-91 serves as a coordination point for Zn(2+). Intrachain disulfides connect Cys-99–Cys-115, Cys-114–Cys-125, Cys-147–Cys-192, Cys-191–Cys-200, Cys-223–Cys-269, and Cys-268–Cys-276. A Phosphothreonine modification is found at Thr-107. An N6-succinyllysine modification is found at Lys-228. Glu-267 lines the Ca(2+) pocket. Residues His-270 and Asp-272 each coordinate Zn(2+). Residues Asp-272, Glu-275, Asp-278, and Asp-282 each coordinate Ca(2+). 8 disulfide bridges follow: Cys-288–Cys-302, Cys-301–Cys-312, Cys-339–Cys-384, Cys-383–Cys-392, Cys-415–Cys-461, Cys-460–Cys-471, Cys-484–Cys-500, and Cys-499–Cys-510. At Ser-296 the chain carries Phosphoserine. Residue Ser-442 is modified to Phosphoserine. Residues Thr-443 and Thr-445 each carry the phosphothreonine modification. An N6-succinyllysine modification is found at Lys-459. Residue Ser-512 is modified to Phosphoserine. Cystine bridges form between Cys-537–Cys-582 and Cys-581–Cys-590. At Lys-557 the chain carries N6-methyllysine. Thr-569 bears the Phosphothreonine mark. Residue Lys-587 is modified to N6-succinyllysine.

The protein belongs to the ALB/AFP/VDB family. Interacts with FCGRT; this interaction regulates ALB homeostasis. Interacts with TASOR. In plasma, occurs in a covalently-linked complex with chromophore-bound alpha-1-microglobulin; this interaction does not prevent fatty acid binding to ALB. Phosphorylated by FAM20C in the extracellular medium. As to expression, plasma.

It is found in the secreted. Functionally, binds water, Ca(2+), Na(+), K(+), fatty acids, hormones, bilirubin and drugs. Its main function is the regulation of the colloidal osmotic pressure of blood. Major zinc transporter in plasma, typically binds about 80% of all plasma zinc. Major calcium and magnesium transporter in plasma, binds approximately 45% of circulating calcium and magnesium in plasma. Potentially has more than two calcium-binding sites and might additionally bind calcium in a non-specific manner. The shared binding site between zinc and calcium at residue Asp-272 suggests a crosstalk between zinc and calcium transport in the blood. The rank order of affinity is zinc &gt; calcium &gt; magnesium. Binds to the bacterial siderophore enterobactin and inhibits enterobactin-mediated iron uptake of E.coli from ferric transferrin, and may thereby limit the utilization of iron and growth of enteric bacteria such as E.coli. Does not prevent iron uptake by the bacterial siderophore aerobactin. The chain is Albumin (ALB) from Ovis aries (Sheep).